Here is a 415-residue protein sequence, read N- to C-terminus: Translation initiation factor 2 subunit gamma (415 aa).

The region spanning 7–206 is the tr-type G domain; sequence QPEVNIGVVG…GIEEYIKTPY (200 aa). Residues 16–23 form a G1 region; the sequence is GHVDHGKT. Mg(2+) contacts are provided by D19, T23, G44, and T46. 19 to 24 contributes to the GTP binding site; that stretch reads DHGKTT. A G2 region spans residues 44-48; it reads GMTIK. The Zn(2+) site is built by C59, C62, C74, and C77. A G3 region spans residues 93-96; the sequence is DAPG. GTP is bound by residues 149-152 and 184-186; these read NKVD and SAL. Residues 149–152 are G4; the sequence is NKVD. A G5 region spans residues 184 to 186; it reads SAL.

The protein belongs to the TRAFAC class translation factor GTPase superfamily. Classic translation factor GTPase family. EIF2G subfamily. As to quaternary structure, heterotrimer composed of an alpha, a beta and a gamma chain. Mg(2+) serves as cofactor.

The catalysed reaction is GTP + H2O = GDP + phosphate + H(+). Functionally, eIF-2 functions in the early steps of protein synthesis by forming a ternary complex with GTP and initiator tRNA. This is Translation initiation factor 2 subunit gamma from Saccharolobus solfataricus (strain ATCC 35092 / DSM 1617 / JCM 11322 / P2) (Sulfolobus solfataricus).